Reading from the N-terminus, the 454-residue chain is MSTFRQEDVEDHYEMGEELGSGQFAIVRKCRQKGTGKEYAAKFIKKRRLSSSRRGVSREEIEREVNILREIRHPNIITLHDIFENKTDVVLILELVSGGELFDFLAEKESLTEDEATQFLKQILDGVHYLHSKRIAHFDLKPENIMLLDKNVPNPRIKLIDFGIAHKIEAGNEFKNIFGTPEFVAPEIVNYEPLGLEADMWSIGVITYILLSGASPFLGETKQETLTNISAVNYDFDEEYFSNTSELAKDFIRRLLVKDPKRRMTIAQSLEHSWIKAIRRRNVRGEDSGRKPERRRLKTTRLKEYTIKSHSSLPPNNSYADFERFSKVLEEAAAAEEGLRELQRSRRLCHEDVEALAAIYEEKEAWYREESDSLGQDLRRLRQELLKTEALKRQAQEEAKGALLGTSGLKRRFSRLENRYEALAKQVASEMRFVQDLVRALEQEKLQGVECGLR.

The Protein kinase domain maps to 13-275 (YEMGEELGSG…IAQSLEHSWI (263 aa)). ATP contacts are provided by residues 19-27 (LGSGQFAIV) and lysine 42. Serine 50 carries the phosphoserine; by autocatalysis modification. Positions 94 and 96 each coordinate pyridone 6. The Proton acceptor role is filled by aspartate 139. Residues 161–204 (DFGIAHKIEAGNEFKNIFGTPEFVAPEIVNYEPLGLEADMWSIG) form an activation segment region. Phosphothreonine occurs at positions 180 and 225. Threonine 265 carries the post-translational modification Phosphothreonine; by autocatalysis and ROCK1. Phosphothreonine; by autocatalysis, DAPK1 and ROCK1 is present on threonine 299. Threonine 306 bears the Phosphothreonine; by autocatalysis mark. Serine 309 is modified (phosphoserine; by DAPK1). At serine 311 the chain carries Phosphoserine; by autocatalysis and DAPK1. Phosphoserine; by DAPK1 is present on residues serine 312, serine 318, and serine 326. The segment at 427–441 (VASEMRFVQDLVRAL) is leucine-zipper.

This sequence belongs to the protein kinase superfamily. CAMK Ser/Thr protein kinase family. DAP kinase subfamily. As to quaternary structure, homooligomer in its kinase-active form (homotrimers and homodimers are reported); monomeric in its kinase-inactive form. Homodimerization is required for activation segment autophosphorylation. Isoform 1 and isoform 2 interact with myosin and PPP1R12A; interaction of isoform 1 with PPP1R12A is inhibited by RhoA dominant negative form. Interacts with NLK, DAXX, STAT3, RHOD (GTP-bound form) and TCP10L. Interacts with PAWR; the interaction is reported conflictingly: according to PubMed:17953487 does not interact with PAWR. Interacts with ULK1; may be a substrate of ULK1. Interacts with LUZP1; the interaction is likely to occur throughout the cell cycle and reduces the LUZP1-mediated suppression of MYL9 phosphorylation. The cofactor is Mg(2+). In terms of processing, the phosphorylation status is critical for kinase activity, oligomerization and intracellular localization. Phosphorylation at Thr-180, Thr-225 and Thr-265 is essential for activity. The phosphorylated form is localized in the cytoplasm promoted by phosphorylation at Thr-299; nuclear translocation or retention is maximal when it is not phosphorylated. Phosphorylation increases the trimeric form, and its dephosphorylation favors a kinase-inactive monomeric form. Both isoform 1 and isoform 2 can undergo autophosphorylation. In terms of tissue distribution, widely expressed. Isoform 1 and isoform 2 are expressed in the bladder smooth muscle.

Its subcellular location is the nucleus. It localises to the PML body. It is found in the cytoplasm. The protein resides in the cytoskeleton. The protein localises to the microtubule organizing center. Its subcellular location is the centrosome. It localises to the chromosome. It is found in the centromere. The protein resides in the spindle. The protein localises to the midbody. The catalysed reaction is L-seryl-[protein] + ATP = O-phospho-L-seryl-[protein] + ADP + H(+). It carries out the reaction L-threonyl-[protein] + ATP = O-phospho-L-threonyl-[protein] + ADP + H(+). A sequential activation is proposed: autophosphorylation at consensus sites is leading to dimerization of the catalytic domain stabilized by phosphorylation at Ser-50 and activation segment exchange (producing an active confirmation of both kinase modules in trans) followed by phosphorylation at Thr-180 in the activation segment and at other regulatory sites. Phosphorylation at Thr-180, Thr-225 and Thr-265 is essential for activity. Oligomerization is required for full enzymatic activity. Inhibited by pyridone-6 (K00225), a potent, ATP-competitive inhibitor. Its function is as follows. Serine/threonine kinase which is involved in the regulation of apoptosis, autophagy, transcription, translation and actin cytoskeleton reorganization. Involved in the regulation of smooth muscle contraction. Regulates both type I (caspase-dependent) apoptotic and type II (caspase-independent) autophagic cell deaths signal, depending on the cellular setting. Involved in regulation of starvation-induced autophagy. Regulates myosin phosphorylation in both smooth muscle and non-muscle cells. In smooth muscle, regulates myosin either directly by phosphorylating MYL12B and MYL9 or through inhibition of smooth muscle myosin phosphatase (SMPP1M) via phosphorylation of PPP1R12A; the inhibition of SMPP1M functions to enhance muscle responsiveness to Ca(2+) and promote a contractile state. Phosphorylates MYL12B in non-muscle cells leading to reorganization of actin cytoskeleton. Isoform 2 can phosphorylate myosin, PPP1R12A and MYL12B. Overexpression leads to condensation of actin stress fibers into thick bundles. Involved in actin filament focal adhesion dynamics. The function in both reorganization of actin cytoskeleton and focal adhesion dissolution is modulated by RhoD. Positively regulates canonical Wnt/beta-catenin signaling through interaction with NLK and TCF7L2. Phosphorylates RPL13A on 'Ser-77' upon interferon-gamma activation which is causing RPL13A release from the ribosome, RPL13A association with the GAIT complex and its subsequent involvement in transcript-selective translation inhibition. Enhances transcription from AR-responsive promoters in a hormone- and kinase-dependent manner. Involved in regulation of cell cycle progression and cell proliferation. May be a tumor suppressor. In Homo sapiens (Human), this protein is Death-associated protein kinase 3 (DAPK3).